Here is a 75-residue protein sequence, read N- to C-terminus: Acyl carrier protein (75 aa).

A Carrier domain is found at Met-1–Lys-74. Ser-34 is subject to O-(pantetheine 4'-phosphoryl)serine.

Belongs to the acyl carrier protein (ACP) family. In terms of processing, 4'-phosphopantetheine is transferred from CoA to a specific serine of apo-ACP by AcpS. This modification is essential for activity because fatty acids are bound in thioester linkage to the sulfhydryl of the prosthetic group.

The protein resides in the cytoplasm. It participates in lipid metabolism; fatty acid biosynthesis. Carrier of the growing fatty acid chain in fatty acid biosynthesis. The polypeptide is Acyl carrier protein (Fusobacterium nucleatum subsp. nucleatum (strain ATCC 25586 / DSM 15643 / BCRC 10681 / CIP 101130 / JCM 8532 / KCTC 2640 / LMG 13131 / VPI 4355)).